Consider the following 665-residue polypeptide: Pentatricopeptide repeat-containing protein At3g02490, mitochondrial (665 aa).

Residues 1–37 (MRYQWRSLLFRSYRSSPRPFLSHHSRFQVISNSTRSF) constitute a mitochondrion transit peptide. PPR repeat units lie at residues 280–314 (DEKT…GYEM), 315–349 (EMET…SISN), 352–388 (TPHC…GNVV), 389–423 (PDVM…GYVP), 424–458 (SGDL…GNHL), 459–493 (DDKA…EGVS), 495–530 (AGYA…QLKP), and 536–570 (KIMV…GFPP).

The protein belongs to the PPR family. P subfamily.

The protein resides in the mitochondrion. This is Pentatricopeptide repeat-containing protein At3g02490, mitochondrial from Arabidopsis thaliana (Mouse-ear cress).